Consider the following 258-residue polypeptide: MLLVIDVGNTNTVLGIYHEGELEYHWRIETSRHKTEDEFGMLLRSLFDYVGLMFDQIEGIIISSVVPPIMFSLERMCIKYFQIEPQIVGPGMKTGLNIKYDNPKEVGADRIVNAVAAIHLYGSPLIVVDFGTATTYCYINERKEYMGGAIAPGITISTEALYSRAAKLPRIEIARPDHIVGKSTVSAMQSGILYGYVGQVEGIVKRMKWQSKKNPKVIATGGLASLIADESDCIDIVDPFLTLKGLELIYERNRVESV.

6–13 contacts ATP; the sequence is DVGNTNTV. Substrate is bound by residues Y100 and 107–110; that span reads GADR. Residue D109 is the Proton acceptor of the active site. D129 contributes to the K(+) binding site. T132 lines the ATP pocket. T184 serves as a coordination point for substrate.

The protein belongs to the type III pantothenate kinase family. In terms of assembly, homodimer. NH4(+) is required as a cofactor. Requires K(+) as cofactor.

It localises to the cytoplasm. It catalyses the reaction (R)-pantothenate + ATP = (R)-4'-phosphopantothenate + ADP + H(+). The protein operates within cofactor biosynthesis; coenzyme A biosynthesis; CoA from (R)-pantothenate: step 1/5. Catalyzes the phosphorylation of pantothenate (Pan), the first step in CoA biosynthesis. In Bacillus licheniformis (strain ATCC 14580 / DSM 13 / JCM 2505 / CCUG 7422 / NBRC 12200 / NCIMB 9375 / NCTC 10341 / NRRL NRS-1264 / Gibson 46), this protein is Type III pantothenate kinase.